A 196-amino-acid polypeptide reads, in one-letter code: Peptidyl-tRNA hydrolase (196 aa).

Position 18 (Tyr18) interacts with tRNA. The active-site Proton acceptor is the His23. Phe69, Asn71, and Asn117 together coordinate tRNA.

This sequence belongs to the PTH family. As to quaternary structure, monomer.

Its subcellular location is the cytoplasm. It catalyses the reaction an N-acyl-L-alpha-aminoacyl-tRNA + H2O = an N-acyl-L-amino acid + a tRNA + H(+). In terms of biological role, hydrolyzes ribosome-free peptidyl-tRNAs (with 1 or more amino acids incorporated), which drop off the ribosome during protein synthesis, or as a result of ribosome stalling. Catalyzes the release of premature peptidyl moieties from peptidyl-tRNA molecules trapped in stalled 50S ribosomal subunits, and thus maintains levels of free tRNAs and 50S ribosomes. This Vibrio parahaemolyticus serotype O3:K6 (strain RIMD 2210633) protein is Peptidyl-tRNA hydrolase.